The following is a 308-amino-acid chain: Oxygen-dependent coproporphyrinogen-III oxidase (308 aa).

S100 lines the substrate pocket. 2 residues coordinate a divalent metal cation: H104 and H114. H114 acts as the Proton donor in catalysis. 116-118 (NFR) contributes to the substrate binding site. A divalent metal cation is bound by residues H153 and H183. Positions 248 to 283 (YVEFNLVFDRGTIFGLQSGGRTESILSSMPPMASWR) are important for dimerization. 266 to 268 (GGR) contributes to the substrate binding site.

The protein belongs to the aerobic coproporphyrinogen-III oxidase family. In terms of assembly, homodimer. It depends on a divalent metal cation as a cofactor.

Its subcellular location is the cytoplasm. The catalysed reaction is coproporphyrinogen III + O2 + 2 H(+) = protoporphyrinogen IX + 2 CO2 + 2 H2O. It functions in the pathway porphyrin-containing compound metabolism; protoporphyrin-IX biosynthesis; protoporphyrinogen-IX from coproporphyrinogen-III (O2 route): step 1/1. In terms of biological role, involved in the heme biosynthesis. Catalyzes the aerobic oxidative decarboxylation of propionate groups of rings A and B of coproporphyrinogen-III to yield the vinyl groups in protoporphyrinogen-IX. This Francisella tularensis subsp. novicida (strain U112) protein is Oxygen-dependent coproporphyrinogen-III oxidase.